We begin with the raw amino-acid sequence, 540 residues long: Flavin-dependent halogenase ptaM (540 aa).

A signal peptide spans 1-21 (MSVPAQTSVLIVGGGPAGSYA). Residues Gly14, Ala17, and Glu47 each coordinate FAD. N-linked (GlcNAc...) asparagine glycans are attached at residues Asn159, Asn192, Asn204, and Asn243. The chloride site is built by Ser330 and Gly331. Residues Asn480, Asn491, and Asn523 are each glycosylated (N-linked (GlcNAc...) asparagine).

This sequence belongs to the flavin-dependent halogenase family.

The protein operates within secondary metabolite biosynthesis. Its function is as follows. Flavin-dependent halogenase; part of the gene cluster that mediates the biosynthesis of pestheic acid, a diphenyl ether which is a biosynthetic precursor of the unique chloropupukeananes. The biosynthesis initiates from condensation of acetate and malonate units catalyzed by the non-reducing PKS ptaA. As the ptaA protein is TE/CLC domain-deficient, hydrolysis and Claisen cyclization of the polyketide could be catalyzed by ptaB containing a beta-lactamase domain. The ptaB protein might hydrolyze the thioester bond between the ACP of ptaA and the intermediate to release atrochrysone carboxylic acid, which is spontaneously dehydrated to form endocrocin anthrone. Endocrocin anthrone is then converted to endocrocin, catalyzed by the anthrone oxygenase ptaC. Spontaneous decarboxylation of endocrocin occurs to generate emodin. An O-methyltransferase (ptaH or ptaI) could methylate emodin to form physcion. PtaJ could then catalyze the oxidative cleavage of physcion, and rotation of the intermediate could then afford desmethylisosulochrin. PtaF, a putative NADH-dependent oxidoreductase, might also participate in the oxidative cleavage step. Desmethylisosulochrin is then transformed by another O-methyltransferase (ptaH or ptaI) to form isosulochrin. Chlorination of isosulochrin by ptaM in the cyclohexadienone B ring then produces chloroisosulochrin. PtaE is responsible for the oxidative coupling reactions of both benzophenones isosulochrin and chloroisosulochrin to RES-1214-1 and pestheic acid respectively, regardless of chlorination. This is Flavin-dependent halogenase ptaM from Pestalotiopsis fici (strain W106-1 / CGMCC3.15140).